A 141-amino-acid chain; its full sequence is Large ribosomal subunit protein uL11 (141 aa).

It belongs to the universal ribosomal protein uL11 family. As to quaternary structure, part of the ribosomal stalk of the 50S ribosomal subunit. Interacts with L10 and the large rRNA to form the base of the stalk. L10 forms an elongated spine to which L12 dimers bind in a sequential fashion forming a multimeric L10(L12)X complex. One or more lysine residues are methylated.

In terms of biological role, forms part of the ribosomal stalk which helps the ribosome interact with GTP-bound translation factors. The sequence is that of Large ribosomal subunit protein uL11 from Latilactobacillus sakei subsp. sakei (strain 23K) (Lactobacillus sakei subsp. sakei).